A 273-amino-acid chain; its full sequence is MRGSQEVLLMWLLVLAVGGTEHAYRPGRRVCAVRAHGDPVSESFVQRVYQPFLTTCDGHRACSTYRTIYRTAYRRSPGLAPARPRYACCPGWKRTSGLPGACGAAICQPPCRNGGSCVQPGRCRCPAGWRGDTCQSDVDECSARRGGCPQRCVNTAGSYWCQCWEGHSLSADGTLCVPKGGPPRVAPNPTGVDSAMKEEVQRLQSRVDLLEEKLQLVLAPLHSLASQALEHGLPDPGSLLVHSFQQLGRIDSLSEQISFLEEQLGSCSCKKDS.

The first 23 residues, Met-1–Ala-23, serve as a signal peptide directing secretion. One can recognise an EMI domain in the interval Gly-27–Ala-104. 9 disulfides stabilise this stretch: Cys-31-Cys-89, Cys-56-Cys-62, Cys-88-Cys-102, Cys-107-Cys-117, Cys-111-Cys-123, Cys-125-Cys-134, Cys-141-Cys-152, Cys-148-Cys-161, and Cys-163-Cys-176. The EGF-like 1 domain occupies Gly-103–Gln-135. The short motif at Arg-130–Asp-132 is the Cell attachment site element. In terms of domain architecture, EGF-like 2; calcium-binding spans Asp-137–Val-177. Residues Val-192–Ala-219 are a coiled coil.

Interacts with ITGAV/ITGB3 in an RGD-dependent manner, increasing endothelial cell's motility.

It localises to the secreted. It is found in the extracellular space. In terms of biological role, regulates vascular tubulogenesis in vivo. Inhibits platelet-derived growth factor (PDGF)-BB-induced smooth muscle cell migration and promotes endothelial cell adhesion to the extracellular matrix and angiogenesis. The chain is Epidermal growth factor-like protein 7 (EGFL7) from Homo sapiens (Human).